A 548-amino-acid polypeptide reads, in one-letter code: Natural resistance-associated macrophage protein 1 (548 aa).

Over residues 1 to 11 (MSGDTGPSKQG) the composition is skewed to polar residues. The disordered stretch occupies residues 1 to 38 (MSGDTGPSKQGGTRYGSISSPPSPGPQQAPPGGTYLGE). At 1-55 (MSGDTGPSKQGGTRYGSISSPPSPGPQQAPPGGTYLGEKIPIPDTESGAFSLRKL) the chain is on the cytoplasmic side. A helical transmembrane segment spans residues 56 to 73 (WAFTGPGFLMSIAFLDPG). At 74–82 (NIESDLQAG) the chain is on the extracellular side. The chain crosses the membrane as a helical span at residues 83–102 (AVAGFKLLWVLLWATVLGLL). Topologically, residues 103-139 (CQRLAARLGVVTGKDLGEVCHLYYPKVPRILLWLTIE) are cytoplasmic. Residues 140-160 (LAIVGSDMQEVIGTAIAFSLL) form a helical membrane-spanning segment. At 161–164 (SAGR) the chain is on the extracellular side. The helical transmembrane segment at 165–184 (IPLWGGVLITVVDTFFFLFL) threads the bilayer. Over 185–193 (DNYGLRKLE) the chain is Cytoplasmic. A helical transmembrane segment spans residues 194–214 (AFFGFLITIMALTFGYEYVVA). The Extracellular segment spans residues 215–237 (QPAQGALLQGLFLPSCRGCGQPE). Residues 238 to 256 (LLQAVGIIGAIIMPHNIYL) form a helical membrane-spanning segment. At 257–284 (HSSLVKSREVDRSRRADIREANMYFLIE) the chain is on the cytoplasmic side. Residues 285 to 304 (ATIALSVSFLINLFVMAVFG) form a helical membrane-spanning segment. Residues 305–346 (QAFYKQTNQAAFNICAKSSLHDYAPIFPRNNLTVAVDIYQGG) lie on the Extracellular side of the membrane. N-linked (GlcNAc...) asparagine glycosylation is present at Asn335. A helical membrane pass occupies residues 347–366 (VILGCLFGPAALYIWAVGLL). The Cytoplasmic portion of the chain corresponds to 367 to 397 (AAGQSSTMTGTYAGQFVMEGFLKLRWSRFAR). Residues 398 to 415 (VLLTRSCAILPTVLLAVF) traverse the membrane as a helical segment. At 416-426 (RDLRDLSGLND) the chain is on the extracellular side. A helical membrane pass occupies residues 427–447 (LLNVLQSLLLPFAVLPILTFT). Topologically, residues 448–463 (SMPALMQEFANGLVSK) are cytoplasmic. The chain crosses the membrane as a helical span at residues 464 to 485 (VITSSIMVLVCAVNLYFVISYV). Topologically, residues 486 to 493 (PSLPHPAY) are extracellular. A helical membrane pass occupies residues 494 to 513 (FSLVALLAAAYLGLTTYLVW). At 514 to 548 (TCLITQGATFLAHNSHQRFLYGLPEEDQEKGRTSG) the chain is on the cytoplasmic side.

Belongs to the NRAMP family.

It is found in the late endosome membrane. It localises to the lysosome membrane. It carries out the reaction Zn(2+)(in) + H(+)(out) = Zn(2+)(out) + H(+)(in). The enzyme catalyses Fe(2+)(in) + H(+)(out) = Fe(2+)(out) + H(+)(in). It catalyses the reaction Mn(2+)(in) + H(+)(out) = Mn(2+)(out) + H(+)(in). Macrophage-specific antiporter that fluxes metal ions in either direction against a proton gradient. Localized to late endosomal lysosomal membranes, delivers bivalent cations from the cytosol into these acidic compartments where they may directly affect antimicrobial activity. Involved in iron metabolism and host natural resistance to infection with intracellular parasites. Pathogen resistance involves sequestration of Fe(2+) and Mn(2+), cofactors of both prokaryotic and eukaryotic catalases and superoxide dismutases, not only to protect the macrophage against its own generation of reactive oxygen species, but to deny the cations to the pathogen for synthesis of its protective enzymes. The sequence is that of Natural resistance-associated macrophage protein 1 (SLC11A1) from Bubalus bubalis (Domestic water buffalo).